We begin with the raw amino-acid sequence, 596 residues long: MDHIRNFSIIAHIDHGKSTLADRIIHLCGGLSDREMEAQVLDSMDIERERGITIKAQTAALSYKARDGKVYNLNLIDTPGHVDFSYEVSRSLSACEGALLVVDASQGVEAQTVANCYTALELDVEVVPVLNKIDLPSADPENARQEIEDVIGIDASEAVLASAKTGLGVEDILEAVVARIPPPKGNPDAPLKALIIDSWFDNYVGVVMLVRVVDGVIKPKDKLLFMATEAEQLCEQVGVFAPKSEKRDMLRAGEVGFVISGIKELKAAKVGDTITTMDRKATEALPGFKEIKPQVFAGLYPVESNQYDSLRESLEKLKLNDASLQYEPEVSQALGFGFRCGFLGLLHMEIVQERLEREFDQDLITTAPTVVYQVVMRDGSIIEVENPAKLPDVTKMEEVREPIITATIFVPQDYLGNVITLCNQKRGNQVDMHYHGRQVKLVYEMPMAEVVMDFFDKLKSCSKGYASLDYDFKEYRAADVVKLDILINSEKVDALSLIVHRANAQYRGRELASKMRELIPRQMYDVAIQAAIGSHIISRENVKAMRKDVLAKCYGGDISRKKKLLEKQKAGKKRMKQVGSVEIPQEAFLAVLRVDN.

Residues 2 to 184 (DHIRNFSIIA…AVVARIPPPK (183 aa)) enclose the tr-type G domain. Residues 14 to 19 (DHGKST) and 131 to 134 (NKID) contribute to the GTP site.

It belongs to the TRAFAC class translation factor GTPase superfamily. Classic translation factor GTPase family. LepA subfamily.

It localises to the cell inner membrane. It catalyses the reaction GTP + H2O = GDP + phosphate + H(+). Required for accurate and efficient protein synthesis under certain stress conditions. May act as a fidelity factor of the translation reaction, by catalyzing a one-codon backward translocation of tRNAs on improperly translocated ribosomes. Back-translocation proceeds from a post-translocation (POST) complex to a pre-translocation (PRE) complex, thus giving elongation factor G a second chance to translocate the tRNAs correctly. Binds to ribosomes in a GTP-dependent manner. This chain is Elongation factor 4, found in Dechloromonas aromatica (strain RCB).